Consider the following 906-residue polypeptide: Protein translocase subunit SecA (906 aa).

ATP contacts are provided by residues Q86, 104 to 108 (GEGKT), and D499. The disordered stretch occupies residues 862–887 (KPVVSRIDPKDRNPDDPTSWGRVSRN). C890, C892, C901, and H902 together coordinate Zn(2+).

It belongs to the SecA family. As to quaternary structure, monomer and homodimer. Part of the essential Sec protein translocation apparatus which comprises SecA, SecYEG and auxiliary proteins SecDF-YajC and YidC. Zn(2+) serves as cofactor.

The protein resides in the cell inner membrane. Its subcellular location is the cytoplasm. It catalyses the reaction ATP + H2O + cellular proteinSide 1 = ADP + phosphate + cellular proteinSide 2.. In terms of biological role, part of the Sec protein translocase complex. Interacts with the SecYEG preprotein conducting channel. Has a central role in coupling the hydrolysis of ATP to the transfer of proteins into and across the cell membrane, serving both as a receptor for the preprotein-SecB complex and as an ATP-driven molecular motor driving the stepwise translocation of polypeptide chains across the membrane. The protein is Protein translocase subunit SecA of Rickettsia peacockii (strain Rustic).